The following is an 83-amino-acid chain: U20-theraphotoxin-Cg1a 1 (83 aa).

A signal peptide spans 1-21 (MKVSVLITLAVLGVMFVWTSA). Positions 22-47 (AELEERGSDQPAWLKSLERIFQSEER) are excised as a propeptide. Intrachain disulfides connect Cys49-Cys63, Cys56-Cys68, and Cys62-Cys76.

It belongs to the neurotoxin 10 (Hwtx-1) family. 40 (Jztx-35) subfamily. In terms of tissue distribution, expressed by the venom gland.

It is found in the secreted. Its function is as follows. Probable ion channel inhibitor. The protein is U20-theraphotoxin-Cg1a 1 of Chilobrachys guangxiensis (Chinese earth tiger tarantula).